A 271-amino-acid polypeptide reads, in one-letter code: MDNRPIGFLDSGVGGLTVVRELKRQLPYESIVYIGDSARAPYGPRPAGQIREYTWQLVKFLLTKDVKMIVIACNTATAVVWEEIKESLDIPVLGVVLPGSSAAIKSSRSGQIGVIGTPMTISSNIYEQKIKRLAPQMNVLSLSCPRFAPIVESNEINSSVAKKIVYESMAPLVDRVDTLVLGCTHYPLLRPIIQNVMGLSVKLIDSGAETVRDVSVLLNYFEINRSREVKDKTEEYYTTASVLGFKEIAEQWLGEEVTVQHVDLDKELEND.

Substrate-binding positions include 10–11 (DS) and 42–43 (YG). C73 serves as the catalytic Proton donor/acceptor. 74 to 75 (NT) provides a ligand contact to substrate. The Proton donor/acceptor role is filled by C183. Position 184–185 (184–185 (TH)) interacts with substrate.

This sequence belongs to the aspartate/glutamate racemases family.

The enzyme catalyses L-glutamate = D-glutamate. The protein operates within cell wall biogenesis; peptidoglycan biosynthesis. Functionally, provides the (R)-glutamate required for cell wall biosynthesis. The chain is Glutamate racemase from Streptococcus thermophilus (strain ATCC BAA-250 / LMG 18311).